We begin with the raw amino-acid sequence, 117 residues long: MTRAKSGKISKNRHKKILKLAKGYRGRANSCFRVAIEKVEKALQYAYRDRRNRKRDFRGLWIQRINAAVREHGLVYSQFMGALKKAEIDIDRKVLAELAVNNSDGFASIIEQAKAHI.

The protein belongs to the bacterial ribosomal protein bL20 family.

Functionally, binds directly to 23S ribosomal RNA and is necessary for the in vitro assembly process of the 50S ribosomal subunit. It is not involved in the protein synthesizing functions of that subunit. The protein is Large ribosomal subunit protein bL20 of Rickettsia felis (strain ATCC VR-1525 / URRWXCal2) (Rickettsia azadi).